Consider the following 427-residue polypeptide: Glutamate-1-semialdehyde 2,1-aminomutase (427 aa).

Lys265 is modified (N6-(pyridoxal phosphate)lysine).

The protein belongs to the class-III pyridoxal-phosphate-dependent aminotransferase family. HemL subfamily. In terms of assembly, homodimer. It depends on pyridoxal 5'-phosphate as a cofactor.

It is found in the cytoplasm. It carries out the reaction (S)-4-amino-5-oxopentanoate = 5-aminolevulinate. Its pathway is porphyrin-containing compound metabolism; protoporphyrin-IX biosynthesis; 5-aminolevulinate from L-glutamyl-tRNA(Glu): step 2/2. The sequence is that of Glutamate-1-semialdehyde 2,1-aminomutase from Burkholderia vietnamiensis (strain G4 / LMG 22486) (Burkholderia cepacia (strain R1808)).